A 118-amino-acid chain; its full sequence is Acidic phospholipase A2 homolog (118 aa).

7 disulfides stabilise this stretch: C11–C70, C25–C117, C27–C43, C42–C98, C49–C91, C59–C84, and C77–C89.

It belongs to the phospholipase A2 family. Group I subfamily. A49 sub-subfamily. As to expression, expressed by the venom gland.

Its subcellular location is the secreted. Snake venom phospholipase A2 (PLA2) homolog that lacks both catalytic and neurotoxicity activities. The protein is Acidic phospholipase A2 homolog of Bungarus fasciatus (Banded krait).